A 93-amino-acid polypeptide reads, in one-letter code: Small ribosomal subunit protein uS19 (93 aa).

Residues 73–93 form a disordered region; the sequence is EFSPTRTYRGHNKKDKKIQKK. The span at 80 to 93 shows a compositional bias: basic residues; that stretch reads YRGHNKKDKKIQKK.

This sequence belongs to the universal ribosomal protein uS19 family.

Protein S19 forms a complex with S13 that binds strongly to the 16S ribosomal RNA. This Aster yellows phytoplasma protein is Small ribosomal subunit protein uS19 (rpsS).